The primary structure comprises 159 residues: MAEQVVEILVSGGKATAGPPLGPAIGPLGVNIMQVVQKINNMTKDYEGMSVPVKVIVDTDKRTFEVEVGIPPASALIKKEIGIEKGSQEPKHQVAGNITMEQIVKIAKMKQDAMLAYNLKNASKEVVGTCVSVGISVEGMTPSEAQKAIDAGQFDSYFN.

It belongs to the universal ribosomal protein uL11 family. Part of the ribosomal stalk of the 50S ribosomal subunit. Interacts with L10 and the large rRNA to form the base of the stalk. L10 forms an elongated spine to which L12 dimers bind in a sequential fashion forming a multimeric L10(L12)X complex.

In terms of biological role, forms part of the ribosomal stalk which helps the ribosome interact with GTP-bound translation factors. The protein is Large ribosomal subunit protein uL11 of Methanococcus maripaludis (strain DSM 14266 / JCM 13030 / NBRC 101832 / S2 / LL).